The chain runs to 469 residues: Glutamate--tRNA ligase (469 aa).

The 'HIGH' region motif lies at 9-19; it reads PSPTGFLHVGG. Residues Cys-98, Cys-100, Cys-125, and Asp-127 each coordinate Zn(2+). A 'KMSKS' region motif is present at residues 236–240; that stretch reads KLSKR. Lys-239 contributes to the ATP binding site.

Belongs to the class-I aminoacyl-tRNA synthetase family. Glutamate--tRNA ligase type 1 subfamily. In terms of assembly, monomer. Zn(2+) serves as cofactor.

It localises to the cytoplasm. The enzyme catalyses tRNA(Glu) + L-glutamate + ATP = L-glutamyl-tRNA(Glu) + AMP + diphosphate. Functionally, catalyzes the attachment of glutamate to tRNA(Glu) in a two-step reaction: glutamate is first activated by ATP to form Glu-AMP and then transferred to the acceptor end of tRNA(Glu). This is Glutamate--tRNA ligase from Shewanella sp. (strain ANA-3).